The chain runs to 202 residues: Phospholipase A2 inhibitor gamma subunit A (202 aa).

The N-terminal stretch at 1–19 (MKSLQIICLLFIFVARGSC) is a signal peptide. 8 cysteine pairs are disulfide-bonded: cysteine 22–cysteine 47, cysteine 25–cysteine 32, cysteine 40–cysteine 68, cysteine 74–cysteine 95, cysteine 96–cysteine 101, cysteine 119–cysteine 144, cysteine 137–cysteine 166, and cysteine 170–cysteine 192. The N-linked (GlcNAc...) asparagine glycan is linked to asparagine 177.

This sequence belongs to the CNF-like-inhibitor family. As to quaternary structure, heterodimer of subunit A and subunit B. Post-translationally, N-glycosylated. Expressed by the liver. Not expressed in esophagus, stomach, pancreas, spleen, gall bladder, small intestine, rectum, kidney, trachea, lung, testis and body fat.

Its subcellular location is the secreted. In terms of biological role, inhibits the enzymatic activity of all phospholipase A2 (PA2) groups. In Elaphe quadrivirgata (Japanese four-lined ratsnake), this protein is Phospholipase A2 inhibitor gamma subunit A.